We begin with the raw amino-acid sequence, 335 residues long: Cholinephosphotransferase 1 (335 aa).

2 helical membrane passes run 53–73 and 84–108; these read PNAI…PLIA and FWAY…GKQA. Asparagine 54 serves as a coordination point for CDP-choline. Mg(2+) is bound by residues aspartate 101 and aspartate 104. Arginine 109 is a CDP-choline binding site. 6 helical membrane-spanning segments follow: residues 116–140, 151–169, 181–197, 213–238, 267–276, and 284–313; these read PLGE…SCIA, FFCC…WQTY, VTEV…VSAF, ELKF…RIIF, IGPGLLFLDQ, and EYVV…IAAH. Residue aspartate 122 coordinates Mg(2+). Catalysis depends on histidine 123, which acts as the Proton acceptor. Aspartate 126 is a binding site for Mg(2+).

It belongs to the CDP-alcohol phosphatidyltransferase class-I family. It depends on Mg(2+) as a cofactor. Requires Mn(2+) as cofactor.

The protein localises to the golgi apparatus membrane. The enzyme catalyses CDP-choline + a 1,2-diacyl-sn-glycerol = a 1,2-diacyl-sn-glycero-3-phosphocholine + CMP + H(+). The catalysed reaction is 1-octadecanoyl-2-(5Z,8Z,11Z,14Z-eicosatetraenoyl)-sn-glycerol + CDP-choline = 1-octadecanoyl-2-(5Z,8Z,11Z,14Z-eicosatetraenoyl)-sn-glycero-3-phosphocholine + CMP + H(+). It carries out the reaction 1-hexadecanoyl-2-(9Z-octadecenoyl)-sn-glycerol + CDP-choline = 1-hexadecanoyl-2-(9Z-octadecenoyl)-sn-glycero-3-phosphocholine + CMP + H(+). It catalyses the reaction 1-hexadecanoyl-2-(4Z,7Z,10Z,13Z,16Z,19Z-docosahexaenoyl)-sn-glycerol + CDP-choline = 1-hexadecanoyl-2-(4Z,7Z,10Z,13Z,16Z,19Z-docosahexaenoyl)-sn-glycero-3-phosphocholine + CMP + H(+). The enzyme catalyses 1,2-dioctanoyl-sn-glycerol + CDP-choline = 1,2-dioctanoyl-sn-glycero-3-phosphocholine + CMP + H(+). It participates in phospholipid metabolism; phosphatidylcholine biosynthesis; phosphatidylcholine from phosphocholine: step 2/2. Functionally, catalyzes the final step of de novo phosphatidylcholine (PC) synthesis, i.e. the transfer of choline phosphate from CDP-choline to the free hydroxyl of a diacylglycerol (DAG), producing a PC. It thereby plays a central role in the formation and maintenance of vesicular membranes. The protein is Cholinephosphotransferase 1 (CHPT1) of Gallus gallus (Chicken).